The following is a 279-amino-acid chain: Pantothenate synthetase (279 aa).

ATP is bound at residue 26 to 33 (MGNLHEGH). The Proton donor role is filled by His-33. Gln-57 is a (R)-pantoate binding site. Gln-57 lines the beta-alanine pocket. 144–147 (GKKD) lines the ATP pocket. Gln-150 serves as a coordination point for (R)-pantoate. ATP is bound by residues Val-173 and 181-184 (LSSR).

It belongs to the pantothenate synthetase family. Homodimer.

It localises to the cytoplasm. The enzyme catalyses (R)-pantoate + beta-alanine + ATP = (R)-pantothenate + AMP + diphosphate + H(+). It participates in cofactor biosynthesis; (R)-pantothenate biosynthesis; (R)-pantothenate from (R)-pantoate and beta-alanine: step 1/1. Functionally, catalyzes the condensation of pantoate with beta-alanine in an ATP-dependent reaction via a pantoyl-adenylate intermediate. The chain is Pantothenate synthetase from Burkholderia thailandensis (strain ATCC 700388 / DSM 13276 / CCUG 48851 / CIP 106301 / E264).